The chain runs to 259 residues: Deoxyribose-phosphate aldolase (259 aa).

Asp-102 acts as the Proton donor/acceptor in catalysis. Lys-166 (schiff-base intermediate with acetaldehyde) is an active-site residue. Lys-200 serves as the catalytic Proton donor/acceptor.

Belongs to the DeoC/FbaB aldolase family. DeoC type 2 subfamily.

It is found in the cytoplasm. It catalyses the reaction 2-deoxy-D-ribose 5-phosphate = D-glyceraldehyde 3-phosphate + acetaldehyde. Its pathway is carbohydrate degradation; 2-deoxy-D-ribose 1-phosphate degradation; D-glyceraldehyde 3-phosphate and acetaldehyde from 2-deoxy-alpha-D-ribose 1-phosphate: step 2/2. In terms of biological role, catalyzes a reversible aldol reaction between acetaldehyde and D-glyceraldehyde 3-phosphate to generate 2-deoxy-D-ribose 5-phosphate. The chain is Deoxyribose-phosphate aldolase from Vibrio cholerae serotype O1 (strain ATCC 39315 / El Tor Inaba N16961).